The sequence spans 537 residues: Chaperonin GroEL (537 aa).

ATP contacts are provided by residues 29 to 32 (TLGP), 86 to 90 (DGTTT), Gly-413, and Asp-492.

Belongs to the chaperonin (HSP60) family. As to quaternary structure, forms a cylinder of 14 subunits composed of two heptameric rings stacked back-to-back. Interacts with the co-chaperonin GroES.

The protein resides in the cytoplasm. The catalysed reaction is ATP + H2O + a folded polypeptide = ADP + phosphate + an unfolded polypeptide.. Functionally, together with its co-chaperonin GroES, plays an essential role in assisting protein folding. The GroEL-GroES system forms a nano-cage that allows encapsulation of the non-native substrate proteins and provides a physical environment optimized to promote and accelerate protein folding. This is Chaperonin GroEL from Dehalococcoides mccartyi (strain ATCC BAA-2100 / JCM 16839 / KCTC 5957 / BAV1).